A 125-amino-acid chain; its full sequence is Calcitonin receptor-stimulating peptide 3 (125 aa).

The signal sequence occupies residues 1-25; sequence MGFWKFPPFLILSILVLYQAGMLHA. A propeptide spanning residues 26–79 is cleaved from the precursor; sequence APFRMALGSSFDSATLTEEEMSLLLVAMVKDYVQMKATVLEQETEDFSITTQER. C81 and C86 are joined by a disulfide. Position 116 is a leucine amide (L116). The propeptide occupies 122 to 125; sequence QPQA.

This sequence belongs to the calcitonin family. In terms of tissue distribution, mainly expressed in the thyroid gland and CNS. Found in the nerve cells of cerebrum, hippocampus, hypothalamus, pons/midbrain and thalamus.

The protein resides in the secreted. In Sus scrofa (Pig), this protein is Calcitonin receptor-stimulating peptide 3 (CRSP3).